The chain runs to 104 residues: Pterin-4-alpha-carbinolamine dehydratase (104 aa).

Ala-2 is modified (N-acetylalanine). Substrate is bound by residues 61 to 63 and 78 to 81; these read DHH and STHE.

This sequence belongs to the pterin-4-alpha-carbinolamine dehydratase family. Homotetramer and homodimer. Heterotetramer with HNF1A; formed by a dimer of dimers. Interacts with HNF1B (via HNF-p1 domain); the interaction increases HNF1B transactivation activity.

The protein resides in the cytoplasm. Its subcellular location is the nucleus. It carries out the reaction (4aS,6R)-4a-hydroxy-L-erythro-5,6,7,8-tetrahydrobiopterin = (6R)-L-erythro-6,7-dihydrobiopterin + H2O. Involved in tetrahydrobiopterin biosynthesis. Seems to both prevent the formation of 7-pterins and accelerate the formation of quinonoid-BH2. Coactivator for HNF1A-dependent transcription. Regulates the dimerization of homeodomain protein HNF1A and enhances its transcriptional activity. Also acts as a coactivator for HNF1B-dependent transcription. The protein is Pterin-4-alpha-carbinolamine dehydratase (Pcbd1) of Rattus norvegicus (Rat).